The following is a 146-amino-acid chain: Hemoglobin cathodic subunit beta (146 aa).

A Globin domain is found at 2 to 146; the sequence is HFSDAERDAI…VAAALSSRYF (145 aa). H63 and H92 together coordinate heme b.

The protein belongs to the globin family. As to quaternary structure, heterotetramer of two alpha chains and two beta chains. In terms of tissue distribution, red blood cells.

Functionally, involved in oxygen transport from gills to the various peripheral tissues. In Hoplosternum littorale (Hassar), this protein is Hemoglobin cathodic subunit beta (hbb).